The sequence spans 907 residues: MITKLLTKVIGSRNDRTLRRLRKIVKEINNYEPTFEALSDEQLKAKTVEFRQRLEQGETLDQLLPEAFATVREASKRVYGMRHFDVQLIGGMVLNAGQIAEMRTGEGKTLTATLPAYLNALAGKGVHIVTVNDYLAKRDAETNRPLFEFLGMTVGINVPNMPHPAKKEAYQADILYGTNNEFGFDYLRDNMAFRNEDRVQRERFFAVVDEVDSILIDEARTPLIISGPAEDSSELYTRINALIPLLQKQDKEDSEEYRGDGHYTVDEKSKQVHLTETGQEFVEELMVKNGLMEEGDTLYSPTNISLLHHVNAALRAHVLFEKNVDYIVNEDGEVVIVDEHTGRTMPGRRWSEGLHQAVEAKEGVKIQNENQTLASITFQNYFRLYEKLSGMTGTADTEAFEFQSIYGLETVVIPTNKPMIRNDMPDVVYRTEAEKFAAIIEDIKARVEKGQPVLVGTVSIEKSELLSNALKKAKIKHNVLNAKFHEKEAEIVAEAGKPGSVTIATNMAGRGTDIVLGGSWQAKVESMANPTQEQIDEIKAEWKLVHDQVLESGGLHIIGTERHESRRIDNQLRGRSGRQGDAGSSRFYLSMEDSLLRIFTSDRMAALIQSGMEEGEAIESKMLSRSIEKAQRKVEGRNFDIRKQLLEYDDVANDQRKVVYELRDELMSVDDISDMIEHNRVDVLQGVIDEYIPPQSLEDMWDLEGLQERLKNDFDIDAPVKQWLEEDDKLYEEALREKVINTAVEVYKAKEEVVGAQVLRNFEKSVMLQTLDTLWKEHLAAMDHLRQGIHLRGYAQKNPKQEYKRESFELFEGLLETLKSDVVMILSKVRVQQQEEVERMEAQRRAQAEEAARRAQAQHASAQSQLADDSDEGHHQPVVRDERKVGRNEPCPCGSGKKYKQCHGQIN.

Residues Gln-87, 105–109, and Asp-513 contribute to the ATP site; that span reads GEGKT. Basic and acidic residues predominate over residues 841–853; sequence EAQRRAQAEEAAR. Residues 841–907 are disordered; sequence EAQRRAQAEE…KYKQCHGQIN (67 aa). Residues 854-865 are compositionally biased toward low complexity; that stretch reads RAQAQHASAQSQ. Residues 872–887 are compositionally biased toward basic and acidic residues; sequence EGHHQPVVRDERKVGR. 4 residues coordinate Zn(2+): Cys-891, Cys-893, Cys-902, and His-903.

It belongs to the SecA family. As to quaternary structure, monomer and homodimer. Part of the essential Sec protein translocation apparatus which comprises SecA, SecYEG and auxiliary proteins SecDF-YajC and YidC. It depends on Zn(2+) as a cofactor.

It is found in the cell inner membrane. The protein resides in the cytoplasm. It catalyses the reaction ATP + H2O + cellular proteinSide 1 = ADP + phosphate + cellular proteinSide 2.. Its function is as follows. Part of the Sec protein translocase complex. Interacts with the SecYEG preprotein conducting channel. Has a central role in coupling the hydrolysis of ATP to the transfer of proteins into and across the cell membrane, serving both as a receptor for the preprotein-SecB complex and as an ATP-driven molecular motor driving the stepwise translocation of polypeptide chains across the membrane. The protein is Protein translocase subunit SecA of Vibrio vulnificus (strain CMCP6).